The following is a 491-amino-acid chain: Ketol-acid reductoisomerase (NADP(+)) (491 aa).

The 194-residue stretch at 15-208 folds into the KARI N-terminal Rossmann domain; it reads AQLGKCRFMG…GGHRAGVLES (194 aa). Residues 45-48, arginine 68, arginine 76, serine 78, and 108-110 contribute to the NADP(+) site; these read CGAQ and DKQ. Residue histidine 132 is part of the active site. Glycine 158 is an NADP(+) binding site. KARI C-terminal knotted domains are found at residues 209 to 344 and 345 to 484; these read SFVA…TAPQ and FEGK…MTDM. Residues aspartate 217, glutamate 221, glutamate 389, and glutamate 393 each coordinate Mg(2+). Serine 414 serves as a coordination point for substrate.

It belongs to the ketol-acid reductoisomerase family. The cofactor is Mg(2+).

The catalysed reaction is (2R)-2,3-dihydroxy-3-methylbutanoate + NADP(+) = (2S)-2-acetolactate + NADPH + H(+). It catalyses the reaction (2R,3R)-2,3-dihydroxy-3-methylpentanoate + NADP(+) = (S)-2-ethyl-2-hydroxy-3-oxobutanoate + NADPH + H(+). It participates in amino-acid biosynthesis; L-isoleucine biosynthesis; L-isoleucine from 2-oxobutanoate: step 2/4. It functions in the pathway amino-acid biosynthesis; L-valine biosynthesis; L-valine from pyruvate: step 2/4. Involved in the biosynthesis of branched-chain amino acids (BCAA). Catalyzes an alkyl-migration followed by a ketol-acid reduction of (S)-2-acetolactate (S2AL) to yield (R)-2,3-dihydroxy-isovalerate. In the isomerase reaction, S2AL is rearranged via a Mg-dependent methyl migration to produce 3-hydroxy-3-methyl-2-ketobutyrate (HMKB). In the reductase reaction, this 2-ketoacid undergoes a metal-dependent reduction by NADPH to yield (R)-2,3-dihydroxy-isovalerate. This is Ketol-acid reductoisomerase (NADP(+)) from Salmonella dublin (strain CT_02021853).